The sequence spans 132 residues: UPF0102 protein Achl_2213 (132 aa).

This sequence belongs to the UPF0102 family.

The sequence is that of UPF0102 protein Achl_2213 from Pseudarthrobacter chlorophenolicus (strain ATCC 700700 / DSM 12829 / CIP 107037 / JCM 12360 / KCTC 9906 / NCIMB 13794 / A6) (Arthrobacter chlorophenolicus).